Consider the following 423-residue polypeptide: Histidine--tRNA ligase (423 aa).

This sequence belongs to the class-II aminoacyl-tRNA synthetase family. Homodimer.

The protein resides in the cytoplasm. The enzyme catalyses tRNA(His) + L-histidine + ATP = L-histidyl-tRNA(His) + AMP + diphosphate + H(+). This Desulfosudis oleivorans (strain DSM 6200 / JCM 39069 / Hxd3) (Desulfococcus oleovorans) protein is Histidine--tRNA ligase.